We begin with the raw amino-acid sequence, 144 residues long: Austinoid biosynthesis clusters protein S (144 aa).

This sequence belongs to the trt14 isomerase family. As to quaternary structure, homodimer.

The protein operates within secondary metabolite biosynthesis; terpenoid biosynthesis. Part of the gene cluster B that mediates the biosynthesis of the fungal meroterpenoid acetoxydehydroaustin. The first step of the pathway is the synthesis of 3,5-dimethylorsellinic acid by the polyketide synthase ausA. 3,5-dimethylorsellinic acid is then prenylated by the polyprenyl transferase ausN. Further epoxidation by the FAD-dependent monooxygenase ausM and cyclization by the probable terpene cyclase ausL lead to the formation of protoaustinoid A. Protoaustinoid A is then oxidized to spiro-lactone preaustinoid A3 by the combined action of the FAD-binding monooxygenases ausB and ausC, and the dioxygenase ausE. Acid-catalyzed keto-rearrangement and ring contraction of the tetraketide portion of preaustinoid A3 by ausJ lead to the formation of preaustinoid A4. The aldo-keto reductase ausK, with the help of ausH, is involved in the next step by transforming preaustinoid A4 into isoaustinone which is in turn hydroxylated by the P450 monooxygenase ausI to form austinolide. The cytochrome P450 monooxygenase ausG then modifies austinolide to austinol. Austinol is further acetylated to austin by the O-acetyltransferase ausP, which spontaneously changes to dehydroaustin. The cytochrome P450 monooxygenase then converts dehydroaustin is into 7-dehydrodehydroaustin. The hydroxylation catalyzed by ausR permits the second O-acetyltransferase ausQ to add an additional acetyl group to the molecule, leading to the formation of acetoxydehydroaustin. Due to genetic rearrangements of the clusters and the subsequent loss of some enzymes, the end product of the Penicillium brasilianum austinoid biosynthesis clusters is acetoxydehydroaustin. AusS is necessary for austinoids production and may play a possible function as a regulator. In Penicillium brasilianum, this protein is Austinoid biosynthesis clusters protein S.